A 370-amino-acid chain; its full sequence is 3-hydroxy-3-methylglutaryl-CoA lyase, cytoplasmic (370 aa).

The N-myristoyl glycine moiety is linked to residue Gly-2. Residues 78-345 form the Pyruvate carboxyltransferase domain; that stretch reads VKIVEVGPRD…NTGVNLYKVM (268 aa). Arg-86 provides a ligand contact to substrate. A divalent metal cation is bound by residues Asp-87, His-278, and His-280. Residue Cys-311 is part of the active site. Asn-320 serves as a coordination point for a divalent metal cation.

It belongs to the HMG-CoA lyase family. It depends on a divalent metal cation as a cofactor.

It is found in the cytoplasm. It localises to the cytosol. Its subcellular location is the endoplasmic reticulum membrane. It carries out the reaction (3S)-3-hydroxy-3-methylglutaryl-CoA = acetoacetate + acetyl-CoA. Its pathway is metabolic intermediate metabolism; (S)-3-hydroxy-3-methylglutaryl-CoA degradation; acetoacetate from (S)-3-hydroxy-3-methylglutaryl-CoA: step 1/1. In terms of biological role, non-mitochondrial 3-hydroxy-3-methylglutaryl-CoA lyase that catalyzes a cation-dependent cleavage of (S)-3-hydroxy-3-methylglutaryl-CoA into acetyl-CoA and acetoacetate, a key step in ketogenesis, the products of which support energy production in nonhepatic animal tissues. The chain is 3-hydroxy-3-methylglutaryl-CoA lyase, cytoplasmic (HMGCLL1) from Homo sapiens (Human).